The primary structure comprises 162 residues: MGLETEKADVQLFLDDESYSRHSGVDYADPEKFADAGLDRDPHRLNSHLKVGFEDVIAEPVSTHSFDKVWICSHALFEISKYVIYKFLTVFLAIPLAFVAGILFATLSCLHIWIIMPFVKTCLMLLPSVQTIWKSVTDVVIAPLCTSAGRSFSSVSLQLSHD.

The Cytoplasmic portion of the chain corresponds to 1–86 (MGLETEKADV…FEISKYVIYK (86 aa)). Y19 is subject to Phosphotyrosine; by SRC. A phosphoserine mark is found at S20 and S23. Y27 is modified (phosphotyrosine; by SRC). The segment at residues 87 to 107 (FLTVFLAIPLAFVAGILFATL) is an intramembrane region (helical). Over 108–162 (SCLHIWIIMPFVKTCLMLLPSVQTIWKSVTDVVIAPLCTSAGRSFSSVSLQLSHD) the chain is Cytoplasmic.

Belongs to the caveolin family. In terms of assembly, monomer or homodimer. Interacts with CAV1; the interaction forms a stable heterooligomeric complex that is required for targeting to lipid rafts and for caveolae formation. Tyrosine phosphorylated forms do not form heterooligomers with the Tyr-19-phosphorylated form existing as a monomer or dimer, and the Tyr-27-form as a monomer only. Interacts (tyrosine phosphorylated form) with the SH2 domain-containing proteins, RASA1, NCK1 and SRC. Interacts (tyrosine phosphorylated form) with INSR, the interaction (Tyr-27-phosphorylated form) is increased on insulin stimulation. Interacts (Tyr-19 phosphorylated form) with MAPK1 (phosphorylated form); the interaction, promoted by insulin, leads to nuclear location and MAPK1 activation. Interacts with STAT3; the interaction is increased on insulin-induced tyrosine phosphorylation leading to STAT activation. Post-translationally, phosphorylated on serine and tyrosine residues. CAV1 promotes phosphorylation on Ser-23 which then targets the complex to the plasma membrane, lipid rafts and caveolae. Phosphorylation on both Tyr-19 and Tyr-27 is required for insulin-induced 'Ser-727' phosphorylation of STAT3 and its activation. Phosphorylation on Tyr-19 is required for insulin-induced phosphorylation of MAPK1 and DNA binding of STAT3. Tyrosine phosphorylation is induced by both EGF and insulin.

The protein resides in the nucleus. It is found in the cytoplasm. Its subcellular location is the golgi apparatus membrane. It localises to the cell membrane. The protein localises to the membrane. The protein resides in the caveola. Functionally, may act as a scaffolding protein within caveolar membranes. Interacts directly with G-protein alpha subunits and can functionally regulate their activity. Acts as an accessory protein in conjunction with CAV1 in targeting to lipid rafts and driving caveolae formation. Positive regulator of cellular mitogenesis of the MAPK signaling pathway. Required for the insulin-stimulated nuclear translocation and activation of MAPK1 and STAT3, and the subsequent regulation of cell cycle progression. This chain is Caveolin-2 (CAV2), found in Equus caballus (Horse).